Consider the following 339-residue polypeptide: MAIPLPLTSCSPISTSSSISRTSFVPLTLRNRTFFSNQNYSRRVLISCSSSLSSDNGSSPDSMNGNGNGNGSSLNGQSSFPRLPSFDGTSKPPLKWRRVLLKVSGEALAGDEEQNIDPKVTMAIAREVAAVTRLGIEVAIVVGGGNIFRGSTWAGCSGLDRSSADYIGMLATVMNAIFLQATMESIGIPTRVQTAFRMSEVAEPYIRRRAIRHLEKGRVVIFAAGTGNPFFTTDTAAALRCAEINAEVVLKATNVDGVFDDDPKRNPNARLLDSLTYQEVTSKDLSVMDMTAITLCQENNIPVVVFNLSEPGNIAKAIKGERVGTLIGGTWNSIVTTTS.

The N-terminal 53 residues, 1–53 (MAIPLPLTSCSPISTSSSISRTSFVPLTLRNRTFFSNQNYSRRVLISCSSSLS), are a transit peptide targeting the chloroplast. Residues 52 to 79 (LSSDNGSSPDSMNGNGNGNGSSLNGQSS) are compositionally biased toward low complexity. The interval 52–89 (LSSDNGSSPDSMNGNGNGNGSSLNGQSSFPRLPSFDGT) is disordered. 102–105 (KVSG) is a binding site for ATP. Residues 110–115 (GDEEQN) are involved in allosteric activation by GTP. G144 contacts UMP. Residues G145 and R149 each contribute to the ATP site. Residue D165 coordinates UMP. Residues 180-184 (QATME) and 189-191 (PTR) each bind ATP. 226-233 (TGNPFFTT) is a binding site for UMP. Positions 253, 259, and 262 each coordinate ATP.

The protein belongs to the UMP kinase family. As to quaternary structure, homomultimer. Homohexamer. Forms RNA-containing megadalton-sized complexes. Expressed exclusively in leaves, but not in roots.

The protein localises to the plastid. The protein resides in the chloroplast stroma. The catalysed reaction is UMP + ATP = UDP + ADP. It participates in pyrimidine metabolism; CTP biosynthesis via de novo pathway; UDP from UMP (UMPK route): step 1/1. Catalyzes the reversible phosphorylation of UMP to UDP. Required for specific post-transcriptional processes of many plastid transcripts (e.g. PSI (PsaA, PsaF), PSII (D1, CP43, CP47), Cytochrome b(6)f (Cytb(6)), ATP synthase (AtpC), LHCs (LHCa3, LHCb2), and NDH (NdhH)), thus being essential for retaining photosynthetic activity in chloroplasts. Associates with group II introns of the plastid transcripts trnG-UCC, trnV-UAC, petB, petD and ndhA to stabilize corresponding precursor RNAs. The sequence is that of Uridylate kinase PUMPKIN, chloroplastic from Arabidopsis thaliana (Mouse-ear cress).